The primary structure comprises 556 residues: Formate--tetrahydrofolate ligase (556 aa).

Residue 65 to 72 (TPAGEGKS) participates in ATP binding.

Belongs to the formate--tetrahydrofolate ligase family.

The catalysed reaction is (6S)-5,6,7,8-tetrahydrofolate + formate + ATP = (6R)-10-formyltetrahydrofolate + ADP + phosphate. Its pathway is one-carbon metabolism; tetrahydrofolate interconversion. The chain is Formate--tetrahydrofolate ligase from Streptococcus equi subsp. zooepidemicus (strain H70).